The primary structure comprises 236 residues: MSTGLLAKKVGMTQIFTPEGDCVPVTVLEAGPCTVVRRKTAEKDGYDAVVIGFGVVDEKHAHRLSKPEVGVFKKAGTPIFRHVKEIRVKDAKQLGDLKAGDVLTVDKVFKANQRIDVAGVTKGRGFTGVMKRWNMKGAARDSSTAHEHHRHVGAIGQRKTPGKVWKGKHLPGHYGVDNVTIQNLTVVGIEAEQNVLLVSGAVPGHADGLLFVNTAAKGQPRIKQKQEVRERAKPKV.

The protein belongs to the universal ribosomal protein uL3 family. As to quaternary structure, part of the 50S ribosomal subunit. Forms a cluster with proteins L14 and L19.

One of the primary rRNA binding proteins, it binds directly near the 3'-end of the 23S rRNA, where it nucleates assembly of the 50S subunit. The polypeptide is Large ribosomal subunit protein uL3 (Anaeromyxobacter dehalogenans (strain 2CP-1 / ATCC BAA-258)).